The primary structure comprises 283 residues: Pyridoxine/pyridoxal/pyridoxamine kinase (283 aa).

Substrate contacts are provided by S23 and H59. D125 is an ATP binding site. A Mg(2+)-binding site is contributed by Y136. Residues T157, E162, T195, 222–225 (HAHV), and T232 contribute to the ATP site. E162 contributes to the Mg(2+) binding site. Substrate is bound at residue D234.

The protein belongs to the pyridoxine kinase family. PdxK subfamily. As to quaternary structure, homodimer. Mg(2+) is required as a cofactor.

It catalyses the reaction pyridoxal + ATP = pyridoxal 5'-phosphate + ADP + H(+). The catalysed reaction is pyridoxine + ATP = pyridoxine 5'-phosphate + ADP + H(+). The enzyme catalyses pyridoxamine + ATP = pyridoxamine 5'-phosphate + ADP + H(+). The protein operates within cofactor metabolism; pyridoxal 5'-phosphate salvage; pyridoxal 5'-phosphate from pyridoxal: step 1/1. Its pathway is cofactor metabolism; pyridoxal 5'-phosphate salvage; pyridoxine 5'-phosphate from pyridoxine: step 1/1. It functions in the pathway cofactor metabolism; pyridoxal 5'-phosphate salvage; pyridoxamine 5'-phosphate from pyridoxamine: step 1/1. Functionally, B6-vitamer kinase involved in the salvage pathway of pyridoxal 5'-phosphate (PLP). Catalyzes the phosphorylation of pyridoxine (PN), pyridoxal (PL), and pyridoxamine (PM), forming their respective 5'-phosphorylated esters, i.e. PNP, PLP and PMP. The protein is Pyridoxine/pyridoxal/pyridoxamine kinase of Bordetella bronchiseptica (strain ATCC BAA-588 / NCTC 13252 / RB50) (Alcaligenes bronchisepticus).